The sequence spans 222 residues: Transcriptional regulatory protein BasR (222 aa).

The 115-residue stretch at 2–116 (KILIVEDDTL…ELHARIRALL (115 aa)) folds into the Response regulatory domain. A 4-aspartylphosphate modification is found at D51. A DNA-binding region (ompR/PhoB-type) is located at residues 124–218 (ESELIVGNLT…VRGFGYMLVA (95 aa)).

Homodimer. Post-translationally, phosphorylated by BasS.

It localises to the cytoplasm. Its function is as follows. Member of the two-component regulatory system BasS/BasR. BasR induces the transcription of the ugd, ais, arnBCADTEF and eptA-basRS loci, all involved in resistance to polymyxin. This chain is Transcriptional regulatory protein BasR (basR), found in Escherichia coli (strain K12).